The sequence spans 82 residues: Escargot/snail protein homolog (82 aa).

4 consecutive C2H2-type zinc fingers follow at residues H1 to H5, F18 to H40, C44 to H66, and F72 to A82.

Belongs to the snail C2H2-type zinc-finger protein family.

It is found in the nucleus. The polypeptide is Escargot/snail protein homolog (Bradysia coprophila (Dark-winged fungus gnat)).